The primary structure comprises 452 residues: Phosphoglucosamine mutase (452 aa).

S112 functions as the Phosphoserine intermediate in the catalytic mechanism. S112, D251, D253, and D255 together coordinate Mg(2+). At S112 the chain carries Phosphoserine.

The protein belongs to the phosphohexose mutase family. Requires Mg(2+) as cofactor. Activated by phosphorylation.

It catalyses the reaction alpha-D-glucosamine 1-phosphate = D-glucosamine 6-phosphate. Catalyzes the conversion of glucosamine-6-phosphate to glucosamine-1-phosphate. This Bordetella bronchiseptica (strain ATCC BAA-588 / NCTC 13252 / RB50) (Alcaligenes bronchisepticus) protein is Phosphoglucosamine mutase.